Reading from the N-terminus, the 500-residue chain is Farnesylcysteine lyase (500 aa).

The N-terminal stretch at 1-24 (MKDFPIAISLLFALLSPVLLPCSG) is a signal peptide. N-linked (GlcNAc...) asparagine glycosylation is found at N56, N113, N211, and N281.

It belongs to the prenylcysteine oxidase family. Requires FAD as cofactor. Expressed in seedilings, flowers, stems, leaves and roots.

It is found in the lysosome. It catalyses the reaction S-(2E,6E)-farnesyl-L-cysteine + O2 + H2O = (2E,6E)-farnesal + L-cysteine + H2O2. Its function is as follows. Involved in the degradation of prenylcysteine. Cleaves specifically the thioether bond of S-farnesyl-L-cysteine and has no activity with S-geranylgeranyl-L-cysteine. Also recognizes N-acetyl-farnesylcysteine and may have a role in deprenylation of farnesylated proteins. The chain is Farnesylcysteine lyase from Arabidopsis thaliana (Mouse-ear cress).